Consider the following 102-residue polypeptide: Large ribosomal subunit protein uL24 (102 aa).

It belongs to the universal ribosomal protein uL24 family. Part of the 50S ribosomal subunit.

One of two assembly initiator proteins, it binds directly to the 5'-end of the 23S rRNA, where it nucleates assembly of the 50S subunit. Functionally, one of the proteins that surrounds the polypeptide exit tunnel on the outside of the subunit. The sequence is that of Large ribosomal subunit protein uL24 from Finegoldia magna (strain ATCC 29328 / DSM 20472 / WAL 2508) (Peptostreptococcus magnus).